The chain runs to 432 residues: Glutamyl-tRNA reductase (432 aa).

Residues 50–53 (TCNR), Ser110, 115–117 (ETQ), and Gln121 contribute to the substrate site. Cys51 serves as the catalytic Nucleophile. 190 to 195 (GVGEMS) is a binding site for NADP(+).

Belongs to the glutamyl-tRNA reductase family. In terms of assembly, homodimer.

It catalyses the reaction (S)-4-amino-5-oxopentanoate + tRNA(Glu) + NADP(+) = L-glutamyl-tRNA(Glu) + NADPH + H(+). Its pathway is porphyrin-containing compound metabolism; protoporphyrin-IX biosynthesis; 5-aminolevulinate from L-glutamyl-tRNA(Glu): step 1/2. Catalyzes the NADPH-dependent reduction of glutamyl-tRNA(Glu) to glutamate 1-semialdehyde (GSA). The protein is Glutamyl-tRNA reductase of Sulfurimonas denitrificans (strain ATCC 33889 / DSM 1251) (Thiomicrospira denitrificans (strain ATCC 33889 / DSM 1251)).